A 229-amino-acid chain; its full sequence is Probable methylthioribulose-1-phosphate dehydratase (229 aa).

A substrate-binding site is contributed by C97. Zn(2+)-binding residues include H115 and H117. E139 functions as the Proton donor/acceptor in the catalytic mechanism. H195 lines the Zn(2+) pocket.

It belongs to the aldolase class II family. MtnB subfamily. It depends on Zn(2+) as a cofactor.

The protein resides in the cytoplasm. It catalyses the reaction 5-(methylsulfanyl)-D-ribulose 1-phosphate = 5-methylsulfanyl-2,3-dioxopentyl phosphate + H2O. Its pathway is amino-acid biosynthesis; L-methionine biosynthesis via salvage pathway; L-methionine from S-methyl-5-thio-alpha-D-ribose 1-phosphate: step 2/6. Catalyzes the dehydration of methylthioribulose-1-phosphate (MTRu-1-P) into 2,3-diketo-5-methylthiopentyl-1-phosphate (DK-MTP-1-P). This Acyrthosiphon pisum (Pea aphid) protein is Probable methylthioribulose-1-phosphate dehydratase.